A 514-amino-acid chain; its full sequence is GMP synthase [glutamine-hydrolyzing] (514 aa).

Positions 9-199 constitute a Glutamine amidotransferase type-1 domain; the sequence is KIIVLDFGSQ…ALNVCGCKGD (191 aa). Catalysis depends on cysteine 86, which acts as the Nucleophile. Residues histidine 173 and glutamate 175 contribute to the active site. The GMPS ATP-PPase domain maps to 200-389; sequence WTMENFSEVE…LGMPDAIVWR (190 aa). Residue 227 to 233 participates in ATP binding; sequence SGGVDSS.

In terms of assembly, homodimer.

It catalyses the reaction XMP + L-glutamine + ATP + H2O = GMP + L-glutamate + AMP + diphosphate + 2 H(+). The protein operates within purine metabolism; GMP biosynthesis; GMP from XMP (L-Gln route): step 1/1. Its function is as follows. Catalyzes the synthesis of GMP from XMP. The sequence is that of GMP synthase [glutamine-hydrolyzing] from Listeria monocytogenes serotype 4b (strain F2365).